A 238-amino-acid chain; its full sequence is Type III secretion protein hrcQa (238 aa).

Positions 66-238 (DAEALLSLLG…SHEEHSHHEY (173 aa)) are hrcQa-C.

As to quaternary structure, interacts with hrcQb.

The protein resides in the cell inner membrane. Its function is as follows. Component of the type III secretion system, which is required for effector protein delivery, parasitism, and pathogenicity. Probably participates in the formation of a C-ring-like assembly along with hrcQb. The sequence is that of Type III secretion protein hrcQa (hrcQa) from Pseudomonas syringae pv. syringae.